The following is a 508-amino-acid chain: MGLPWYRVHTVVLNDPGRLIAVHIMHTALVAGWAGSMALYELAVFDPSDSVLDPMWRQGMFILPFMTRLGIKESWGGWSITGEPIANPGLWSYEGVAGAHIVFSGLCFLSATWHWVYWDLEIFSDPRTGKPSLDLPKIFGIHLFLSGVACFGFGAFHVTGLYGPGIWVSDPFGLTGKIQPVSPAWGAEGFDPFVPGGIASHHVAAGLLGIIAGLFHLSVRPPQRLYRGLRMGNIETVLSSSIAAVFFAAFIVAGTMWYGSATTPIELFGPTRYQWDQGYFQQEIDRRVQAGLAENLSLSEAWSRIPEKLAFYDYIGNNPAKGGLFRAGAMDNGDGIAVGWLGHPIFKDKEGNELFVRRMPTFFETFPVVLVDKEGVIKADIPFRRAESKYSVEQVGVTVEFYGGELNGVSFSDPAIVKKYARRAQLGEIFELDRATLKSDGVFRSSPRGWFTFGHATFALLFFFGHIWHGARTLFRDIFAGIDPELDIQVEFGAFQKIGDPTTKRQVV.

Transmembrane regions (helical) follow at residues 21–36, 101–115, 140–156, 203–218, 237–252, and 457–472; these read AVHIMHTALVAGWAGS, IVFSGLCFLSATWHW, GIHLFLSGVACFGFGAF, VAAGLLGIIAGLFHLS, VLSSSIAAVFFAAFIV, and TFALLFFFGHIWHGAR.

The protein belongs to the PsbB/PsbC family. PsbB subfamily. PSII is composed of 1 copy each of membrane proteins PsbA, PsbB, PsbC, PsbD, PsbE, PsbF, PsbH, PsbI, PsbJ, PsbK, PsbL, PsbM, PsbT, PsbX, PsbY, PsbZ, Psb30/Ycf12, at least 3 peripheral proteins of the oxygen-evolving complex and a large number of cofactors. It forms dimeric complexes. The cofactor is Binds multiple chlorophylls. PSII binds additional chlorophylls, carotenoids and specific lipids..

It is found in the plastid. It localises to the chloroplast thylakoid membrane. Its function is as follows. One of the components of the core complex of photosystem II (PSII). It binds chlorophyll and helps catalyze the primary light-induced photochemical processes of PSII. PSII is a light-driven water:plastoquinone oxidoreductase, using light energy to abstract electrons from H(2)O, generating O(2) and a proton gradient subsequently used for ATP formation. This chain is Photosystem II CP47 reaction center protein, found in Welwitschia mirabilis (Tree tumbo).